We begin with the raw amino-acid sequence, 190 residues long: GTP cyclohydrolase 1 (190 aa).

Zn(2+) contacts are provided by Cys75, His78, and Cys146.

It belongs to the GTP cyclohydrolase I family. Toroid-shaped homodecamer, composed of two pentamers of five dimers.

It carries out the reaction GTP + H2O = 7,8-dihydroneopterin 3'-triphosphate + formate + H(+). Its pathway is cofactor biosynthesis; 7,8-dihydroneopterin triphosphate biosynthesis; 7,8-dihydroneopterin triphosphate from GTP: step 1/1. The sequence is that of GTP cyclohydrolase 1 from Campylobacter curvus (strain 525.92).